A 457-amino-acid polypeptide reads, in one-letter code: Exodeoxyribonuclease 7 large subunit (457 aa).

Belongs to the XseA family. As to quaternary structure, heterooligomer composed of large and small subunits.

The protein localises to the cytoplasm. It carries out the reaction Exonucleolytic cleavage in either 5'- to 3'- or 3'- to 5'-direction to yield nucleoside 5'-phosphates.. Functionally, bidirectionally degrades single-stranded DNA into large acid-insoluble oligonucleotides, which are then degraded further into small acid-soluble oligonucleotides. The polypeptide is Exodeoxyribonuclease 7 large subunit (Photorhabdus laumondii subsp. laumondii (strain DSM 15139 / CIP 105565 / TT01) (Photorhabdus luminescens subsp. laumondii)).